The chain runs to 291 residues: Glycine--tRNA ligase alpha subunit (291 aa).

This sequence belongs to the class-II aminoacyl-tRNA synthetase family. Tetramer of two alpha and two beta subunits.

Its subcellular location is the cytoplasm. It carries out the reaction tRNA(Gly) + glycine + ATP = glycyl-tRNA(Gly) + AMP + diphosphate. The sequence is that of Glycine--tRNA ligase alpha subunit from Nitratidesulfovibrio vulgaris (strain DSM 19637 / Miyazaki F) (Desulfovibrio vulgaris).